We begin with the raw amino-acid sequence, 314 residues long: Homoserine kinase (314 aa).

96–106 contributes to the ATP binding site; sequence PIGSGLGSSAC.

Belongs to the GHMP kinase family. Homoserine kinase subfamily.

It is found in the cytoplasm. It catalyses the reaction L-homoserine + ATP = O-phospho-L-homoserine + ADP + H(+). The protein operates within amino-acid biosynthesis; L-threonine biosynthesis; L-threonine from L-aspartate: step 4/5. Catalyzes the ATP-dependent phosphorylation of L-homoserine to L-homoserine phosphate. This chain is Homoserine kinase, found in Histophilus somni (strain 129Pt) (Haemophilus somnus).